Reading from the N-terminus, the 139-residue chain is Trafficking protein particle complex subunit 2-like protein (139 aa).

This sequence belongs to the TRAPP small subunits family. Sedlin subfamily. As to quaternary structure, component of the multisubunit TRAPP (transport protein particle) complex, which includes at least TRAPPC2, TRAPPC2L, TRAPPC3, TRAPPC3L, TRAPPC4, TRAPPC5, TRAPPC8, TRAPPC9, TRAPPC10, TRAPPC11 and TRAPPC12. Interacts with the heterodimer TRAPPC3-TRAPPC6A.

The protein localises to the cytoplasm. It is found in the perinuclear region. It localises to the endoplasmic reticulum. Its subcellular location is the golgi apparatus. Functionally, may play a role in vesicular transport from endoplasmic reticulum to Golgi. In Mus musculus (Mouse), this protein is Trafficking protein particle complex subunit 2-like protein (Trappc2l).